Reading from the N-terminus, the 541-residue chain is Exopolysaccharide phosphotransferase SCO6021 (541 aa).

This sequence belongs to the stealth family.

This chain is Exopolysaccharide phosphotransferase SCO6021, found in Streptomyces coelicolor (strain ATCC BAA-471 / A3(2) / M145).